Reading from the N-terminus, the 137-residue chain is Probable Hsp20 family chaperone (137 aa).

The sHSP domain occupies 25 to 137; it reads LTNNNNIMKT…PKEKHYIKLN (113 aa).

Belongs to the small heat shock protein (HSP20) family.

In terms of biological role, probable chaperone. This Onion yellows phytoplasma (strain OY-M) protein is Probable Hsp20 family chaperone.